The chain runs to 316 residues: WEB family protein At3g13190 (316 aa).

Coiled-coil stretches lie at residues 42–90 (WNKE…MIND), 119–195 (EEES…AEEH), and 233–266 (RDETLKTLEMSEREIEDIKAATQDALKKAEMAQE). The segment at 295 to 316 (STKEVLKSKPRSSSKEGCLVKC) is disordered.

It belongs to the WEB family.

The protein is WEB family protein At3g13190 of Arabidopsis thaliana (Mouse-ear cress).